The chain runs to 231 residues: MRLSLLVTLALTALIEAHTVMVYPGWRGNNLITNETFPYGMQWMYPCGGMGTSRNRTYWPTTGGAVSFQPGWFRGHLQAQLQINLGYGTDGPDGGPPNMSNIMVKPFMLLGPTNNPYPGTVCLPQVPLPAGANVSAGDRATIQVVEQAQHGASLYSCVDIIFAEPGDPRIPIVNETNCFNSTQFGFAQIYTVTTQEPSLDVIASTTTGSAPRYYSWAGWLPLVAGAIWMAL.

A signal peptide spans 1–17; the sequence is MRLSLLVTLALTALIEA. Position 18 (H18) interacts with Cu(2+). N-linked (GlcNAc...) asparagine glycans are attached at residues N34, N55, N98, N133, N174, and N180. Intrachain disulfides connect C47–C157 and C122–C178. I202 is lipidated: GPI-anchor amidated isoleucine. Residues 203–231 constitute a propeptide, removed in mature form; sequence ASTTTGSAPRYYSWAGWLPLVAGAIWMAL.

It belongs to the X325 family. The cofactor is Cu(2+).

The protein resides in the cell membrane. In terms of biological role, lytic polysaccharide monooxygenase-like protein that has diverged to biological functions other than polysaccharide degradation since it does not perform oxidative cleavage of polysaccharides. Acts as a cell surface-bound protein that functions in the copper-accumulation pathway. May also act as the major cell wall sensor that regulates MAP kinase-dependent hyphal anastomosis, the fusion of hyphal cells. The chain is Lytic polysaccharide monooxygenase-like protein X325 from Hypocrea jecorina (strain QM6a) (Trichoderma reesei).